The following is a 324-amino-acid chain: Histidine N-acetyltransferase (324 aa).

Positions 15 to 151 constitute an N-acetyltransferase domain; it reads FEFVLAAEKE…GILLLSFNAP (137 aa).

It catalyses the reaction L-histidine + acetyl-CoA = N(alpha)-acetyl-L-histidine + CoA + H(+). In terms of biological role, enzyme responsible for the N-acetyl-histidine (NAH) synthesis, which is a major constituent of brain and lens of ectothermic vertebrates. The protein is Histidine N-acetyltransferase (hisat) of Xenopus tropicalis (Western clawed frog).